A 432-amino-acid chain; its full sequence is D-amino acid dehydrogenase (432 aa).

Residue V3–W17 participates in FAD binding.

The protein belongs to the DadA oxidoreductase family. FAD serves as cofactor.

It catalyses the reaction a D-alpha-amino acid + A + H2O = a 2-oxocarboxylate + AH2 + NH4(+). It participates in amino-acid degradation; D-alanine degradation; NH(3) and pyruvate from D-alanine: step 1/1. Oxidative deamination of D-amino acids. The sequence is that of D-amino acid dehydrogenase from Cronobacter sakazakii (strain ATCC BAA-894) (Enterobacter sakazakii).